The following is a 511-amino-acid chain: Glucan endo-1,3-beta-glucosidase 1 (511 aa).

A signal peptide spans 1 to 28; it reads MAFTSMVSTVPVLFFFFTLLLISANSSS. A glycan (N-linked (GlcNAc...) asparagine) is linked at Asn109. The active-site Proton donor is Glu137. 2 N-linked (GlcNAc...) asparagine glycosylation sites follow: Asn192 and Asn274. Glu284 acts as the Nucleophile in catalysis. N-linked (GlcNAc...) asparagine glycosylation is found at Asn374, Asn378, Asn407, Asn473, and Asn480. Cys382 and Cys445 are oxidised to a cystine. Residue Ala485 is the site of GPI-anchor amidated alanine attachment. The propeptide at 486–511 is removed in mature form; sequence AGEATSRSLSRGFCVTIMILVTFSIL.

Belongs to the glycosyl hydrolase 17 family. Contains two additional disulfide bonds.

Its subcellular location is the cell membrane. The enzyme catalyses Hydrolysis of (1-&gt;3)-beta-D-glucosidic linkages in (1-&gt;3)-beta-D-glucans.. The sequence is that of Glucan endo-1,3-beta-glucosidase 1 from Arabidopsis thaliana (Mouse-ear cress).